A 130-amino-acid polypeptide reads, in one-letter code: Small ribosomal subunit protein uS9 (130 aa).

The protein belongs to the universal ribosomal protein uS9 family.

The sequence is that of Small ribosomal subunit protein uS9 from Nitrosospira multiformis (strain ATCC 25196 / NCIMB 11849 / C 71).